We begin with the raw amino-acid sequence, 347 residues long: Quinolinate synthase (347 aa).

The iminosuccinate site is built by His-47 and Ser-68. Cys-113 is a binding site for [4Fe-4S] cluster. Residues Tyr-139–Asn-141 and Ser-156 each bind iminosuccinate. A [4Fe-4S] cluster-binding site is contributed by Cys-200. Iminosuccinate-binding positions include His-226–Glu-228 and Thr-243. Cys-297 contacts [4Fe-4S] cluster.

Belongs to the quinolinate synthase family. Type 1 subfamily. The cofactor is [4Fe-4S] cluster.

Its subcellular location is the cytoplasm. It carries out the reaction iminosuccinate + dihydroxyacetone phosphate = quinolinate + phosphate + 2 H2O + H(+). It participates in cofactor biosynthesis; NAD(+) biosynthesis; quinolinate from iminoaspartate: step 1/1. Functionally, catalyzes the condensation of iminoaspartate with dihydroxyacetone phosphate to form quinolinate. In Shigella flexneri serotype 5b (strain 8401), this protein is Quinolinate synthase.